The following is a 747-amino-acid chain: Protein neuralized (747 aa).

The NHR 1 domain occupies 97–251 (PLQFHTVHGD…NCTGIEFLDA (155 aa)). Low complexity predominate over residues 280–292 (LPQQQQQLPQQQL). The segment at 280-309 (LPQQQQQLPQQQLTAHHPLQQSRRSLPGGT) is disordered. The 156-residue stretch at 359 to 514 (PVPFHITKGR…STQSLRMFRQ (156 aa)) folds into the NHR 2 domain. The RING-type zinc-finger motif lies at 694–735 (CTICYENPIDSVLYMCGHMCMCYDCAIEQWRGVGGGQCPLCR).

The protein resides in the nucleus. Functionally, involved in neurogenesis. Interacts with other neurogenic proteins in the specification of the neuroblast versus epidermoblast cell fate. This is Protein neuralized (neur) from Drosophila virilis (Fruit fly).